A 95-amino-acid polypeptide reads, in one-letter code: uncharacterized protein (95 aa).

This is an uncharacterized protein from Escherichia coli O6:H1 (strain CFT073 / ATCC 700928 / UPEC).